We begin with the raw amino-acid sequence, 926 residues long: Sperm-associated antigen 1 (926 aa).

TPR repeat units lie at residues 209–242, 244–275, and 276–309; these read ATRE…LPTV, AYNN…EPGN, and VKAL…EPDN. The segment at 318 to 452 is disordered; sequence EVERDLKNSE…ENPAGLKSQG (135 aa). Phosphoserine occurs at positions 347 and 354. Residues 352–368 show a composition bias toward basic and acidic residues; it reads GKSGRKHEDGGGDKKPA. Positions 369-379 are enriched in low complexity; sequence EPAGAARAAQP. Residue S423 is modified to Phosphoserine. Over residues 428-441 the composition is skewed to gly residues; sequence AGGGATGHPGGGQG. TPR repeat units lie at residues 445-478, 487-520, 522-554, 623-656, 657-690, and 692-724; these read PAGL…LEPA, SILY…HPFS, KPLL…DCGL, FKAL…NNKE, CAIY…ADGN, and KAFY…DPSI. Composition is skewed to basic and acidic residues over residues 758–769 and 784–799; these read IQEVNEGKEEPG and KGGK…EKLP. Residues 758 to 801 are disordered; sequence IQEVNEGKEEPGRPAGEVSMGCLASEKGGKSSRSPEDPEKLPIA. 781–788 serves as a coordination point for GTP; that stretch reads ASEKGGKS. S791 carries the post-translational modification Phosphoserine.

As to expression, present in most tissues, including lung, with the strongest expression in brain, colon, kidney, and testis. In sperm and testis, detected in particular in pachytene primary spermatocytes. Up-regulated in pancreatic tumor tissues and not in normal pancreatic tissue.

It is found in the cytoplasm. It localises to the dynein axonemal particle. In terms of biological role, may play a role in the cytoplasmic assembly of the ciliary dynein arms. May play a role in fertilization. Binds GTP and has GTPase activity. The sequence is that of Sperm-associated antigen 1 (SPAG1) from Homo sapiens (Human).